The sequence spans 460 residues: Malonyl-coenzyme A:anthocyanin 3-O-glucoside-6''-O-malonyltransferase (460 aa).

Residues histidine 173 and aspartate 400 each act as proton acceptor in the active site.

The protein belongs to the plant acyltransferase family.

The enzyme catalyses an anthocyanidin 3-O-beta-D-glucoside + malonyl-CoA = an anthocyanidin 3-O-(6-O-malonyl-beta-D-glucoside) + CoA. Its activity is regulated as follows. Completely inhibited by 5 mM N-ethylmaleimide or 0.1 mM Cu(2+). Partially inhibited by 0.1 mM Fe(2+) or 0.1 mM Hg(2+). Its function is as follows. Catalyzes the transfer of the malonyl group from malonyl-CoA to pelargonidin 3-O-glucoside to produce pelargonidin 3-O-6''-O-malonylglucoside. Can also transfer the malonyl group from malonyl-CoA to cyanidin 3-O-glucoside, delphinidin 3-O-glucoside and quercetin 3-O-glucoside. This chain is Malonyl-coenzyme A:anthocyanin 3-O-glucoside-6''-O-malonyltransferase, found in Dahlia pinnata (Pinnate dahlia).